A 124-amino-acid polypeptide reads, in one-letter code: Galanin peptides (124 aa).

The signal sequence occupies residues methionine 1 to serine 19. Positions alanine 20–glutamate 30 are excised as a propeptide. Threonine 61 is modified (threonine amide). Residues serine 117 and serine 118 each carry the phosphoserine modification.

This sequence belongs to the galanin family. As to expression, expressed in retinal progenitor cells and retinal ganglion cells (at protein level).

Its subcellular location is the secreted. In terms of biological role, endocrine hormone of the central and peripheral nervous systems that binds and activates the G protein-coupled receptors GALR1, GALR2, and GALR3. This small neuropeptide may regulate diverse physiologic functions including contraction of smooth muscle of the gastrointestinal and genitourinary tract, growth hormone and insulin release and adrenal secretion. In Mus musculus (Mouse), this protein is Galanin peptides (Gal).